Reading from the N-terminus, the 98-residue chain is Large ribosomal subunit protein eL21 (98 aa).

A compositionally biased stretch (basic residues) spans 1–17 (MQRSRGFRSKSRRKMTK). Residues 1 to 28 (MQRSRGFRSKSRRKMTKVVREGRSNPIT) form a disordered region.

This sequence belongs to the eukaryotic ribosomal protein eL21 family.

This is Large ribosomal subunit protein eL21 from Methanobrevibacter smithii (strain ATCC 35061 / DSM 861 / OCM 144 / PS).